Here is a 184-residue protein sequence, read N- to C-terminus: ATP synthase subunit b, chloroplastic (184 aa).

Residues 27-49 (LATNPINLSVVLGVLIFFGKGVL) form a helical membrane-spanning segment.

Belongs to the ATPase B chain family. As to quaternary structure, F-type ATPases have 2 components, F(1) - the catalytic core - and F(0) - the membrane proton channel. F(1) has five subunits: alpha(3), beta(3), gamma(1), delta(1), epsilon(1). F(0) has four main subunits: a(1), b(1), b'(1) and c(10-14). The alpha and beta chains form an alternating ring which encloses part of the gamma chain. F(1) is attached to F(0) by a central stalk formed by the gamma and epsilon chains, while a peripheral stalk is formed by the delta, b and b' chains.

The protein resides in the plastid. Its subcellular location is the chloroplast thylakoid membrane. Its function is as follows. F(1)F(0) ATP synthase produces ATP from ADP in the presence of a proton or sodium gradient. F-type ATPases consist of two structural domains, F(1) containing the extramembraneous catalytic core and F(0) containing the membrane proton channel, linked together by a central stalk and a peripheral stalk. During catalysis, ATP synthesis in the catalytic domain of F(1) is coupled via a rotary mechanism of the central stalk subunits to proton translocation. Functionally, component of the F(0) channel, it forms part of the peripheral stalk, linking F(1) to F(0). This Piper cenocladum (Ant piper) protein is ATP synthase subunit b, chloroplastic.